The sequence spans 1755 residues: Deleted in lung and esophageal cancer protein 1 (1755 aa).

Residues 1–12 (METRSSKTRRSL) show a composition bias toward basic residues. 3 disordered regions span residues 1 to 39 (METRSSKTRRSLASRTNECQGTMWAPTSPPAGSSSPSQP), 1339 to 1360 (PGPSSSSEFSHETDSSVEGSSS), and 1529 to 1553 (SQDGASQDHRAPGPGQKQECEEETA). Residues 30–39 (PAGSSSPSQP) show a composition bias toward low complexity.

As to quaternary structure, interacts with alpha- and beta-tubulin. Interacts with BBS2, BBS4, BBS5, MKKS, TCP1, CCT2, CCT3, CCT4, CCT5 and CCT7. As to expression, expressed in all tissues examined. Expression is highest in prostate and testis.

Its subcellular location is the cytoplasm. Functionally, essential for spermatogenesis and male fertility. May play an important role in sperm head and tail formation. May act as a tumor suppressor by inhibiting cell proliferation. The chain is Deleted in lung and esophageal cancer protein 1 from Homo sapiens (Human).